The primary structure comprises 149 residues: Inner membrane protein YfeZ (149 aa).

Over 1–18 (MKSTEFHPVHYDAHGRLR) the chain is Cytoplasmic. The helical transmembrane segment at 19-39 (LPLLFWLVLLLQARTWVLFVI) threads the bilayer. At 40–58 (AGASREQGTALLNLFYPDH) the chain is on the periplasmic side. Residues 59-79 (DNFWLGLIPGIPAVLAFLLSG) form a helical membrane-spanning segment. Residues 80–89 (RRATFPRTWR) lie on the Cytoplasmic side of the membrane. A helical transmembrane segment spans residues 90 to 110 (VLYFLLLLAQVVLLCWQPWLW). Residues 111 to 115 (LNGES) lie on the Periplasmic side of the membrane. A helical transmembrane segment spans residues 116-136 (VSGIGLALVVADIVALIWLLT). The Cytoplasmic segment spans residues 137–149 (NRRLRACFYEVKE).

It localises to the cell inner membrane. The chain is Inner membrane protein YfeZ (yfeZ) from Escherichia coli (strain K12).